The primary structure comprises 444 residues: MYESVDVNPFLMMDYYNQSRGCLIPDKMPHPFSSSIRHQHWSGSNHSIETQSTSSEEIVPSPPSPPPPPRIYKPCFVCQDKSSGYHYGVSACEGCKGFFRRSIQKNMVYTCHREKNCIINKVTRNRCQYCRLQKCLEVGMSKESVRNDRNKKKKEEKKPECTENYTLSPDTEQMIDRVRKAHQETFPSLCQLGKYTTSNSSERRVALDVDLWDKFSELSTKCIIKTVEFAKQLPGFTTLTIADQITLLKAACLDILILRICTRYTPEQDTMTFSDGLTLNRTQMHNAGFGPLTDLVFAFANQLLPLEMDDAETGLLSAICLLCGDRQDLEQADKVDVLQEPLLEALKIYVRNRRPHKPHMFPKMLMKITDLRSISAKGAERVITLKMEIPGSMPPLIQEMLENSEGLESSSGAQGSRASATTPGSCSPSLSPNSAQSSPPTQSP.

Residues 1 to 71 (MYESVDVNPF…PPSPPPPPRI (71 aa)) are modulating. Positions 35–46 (SIRHQHWSGSNH) are enriched in polar residues. Residues 35 to 67 (SIRHQHWSGSNHSIETQSTSSEEIVPSPPSPPP) are disordered. Low complexity predominate over residues 47–58 (SIETQSTSSEEI). Residues 72–147 (YKPCFVCQDK…VGMSKESVRN (76 aa)) constitute a DNA-binding region (nuclear receptor). 2 consecutive NR C4-type zinc fingers follow at residues 75–95 (CFVC…CEGC) and 111–130 (CHRE…CQYC). A hinge region spans residues 148 to 169 (DRNKKKKEEKKPECTENYTLSP). The region spanning 170–404 (DTEQMIDRVR…PLIQEMLENS (235 aa)) is the NR LBD domain. Residues 395–403 (PLIQEMLEN) carry the 9aaTAD motif. The interval 402–444 (ENSEGLESSSGAQGSRASATTPGSCSPSLSPNSAQSSPPTQSP) is disordered.

The protein belongs to the nuclear hormone receptor family. NR1 subfamily. As to quaternary structure, heterodimer; with an rxr molecule. Binds DNA preferentially as a rar/rxr heterodimer. As to expression, in the embryo, zygotic expression largely overlaps that of rarab, with high levels in hindbrain, lateral mesoderm and tail bud. In the adult, strong expression in brain and muscle, weaker expression in ovary, liver and digestive tract.

It is found in the nucleus. In terms of biological role, receptor for retinoic acid. Retinoic acid receptors bind as heterodimers to their target response elements in response to their ligands, all-trans or 9-cis retinoic acid, and regulate gene expression in various biological processes. The rar/rxr heterodimers bind to the retinoic acid response elements (RARE) composed of tandem 5'-AGGTCA-3' sites known as DR1-DR5. Required for hindbrain patterning. The polypeptide is Retinoic acid receptor alpha-A (Danio rerio (Zebrafish)).